The chain runs to 3259 residues: Golgin subfamily B member 1 (3259 aa).

Residue Met1 is modified to N-acetylmethionine. At 1-3235 (MLSRLSGLAN…LRSLCHSRTR (3235 aa)) the chain is on the cytoplasmic side. Ser6, Ser17, Ser138, and Ser528 each carry phosphoserine. A coiled-coil region spans residues 48 to 593 (EDVQERLAYA…RAEEADHEVL (546 aa)). The tract at residues 119 to 142 (GTVLPTEPQSEEQLSKHDKSSTEE) is disordered. A compositionally biased stretch (basic and acidic residues) spans 131–142 (QLSKHDKSSTEE). The interval 624 to 652 (LMPNEESSLPAVEKEQASTEHQSRTSEEI) is disordered. A compositionally biased stretch (basic and acidic residues) spans 635–650 (VEKEQASTEHQSRTSE). Ser653 bears the Phosphoserine mark. 3 coiled-coil regions span residues 677–1028 (DIGQ…KEIP), 1062–1245 (LKQT…ESID), and 1301–1779 (GTSV…TEKH). The segment at 944 to 963 (AKKEQVEEDNEVSSGLKQNY) is disordered. The span at 1747–1763 (SEKDSLSEEVQDLKHQI) shows a compositional bias: basic and acidic residues. The segment at 1747–1829 (SEKDSLSEEV…SANPAVSKDF (83 aa)) is disordered. 2 stretches are compositionally biased toward polar residues: residues 1782 to 1794 (QTNV…QSIP) and 1802 to 1820 (SLSM…SAKS). Residues 1828 to 3185 (DFSSHDEINN…EQIRRLEHSE (1358 aa)) are a coiled coil. A phosphoserine mark is found at Ser2216, Ser2735, Ser2872, and Ser2884. The tract at residues 2856–2876 (RKSEEGKQRSAAQPSTSPAEV) is disordered. Over residues 2865 to 2875 (SAAQPSTSPAE) the composition is skewed to polar residues. The tract at residues 2998 to 3021 (TQPLKVQYQRQASPETSASPDGSQ) is disordered. The residue at position 3037 (Ser3037) is a Phosphoserine. Residues 3107-3140 (IDVAPGAPQEKNGVHRKSDPEELREPQQSFSEAQ) are disordered. Basic and acidic residues predominate over residues 3118 to 3131 (NGVHRKSDPEELRE). Residues 3236-3256 (VPLLAAIYFLMIHVLLILCFT) traverse the membrane as a helical segment. Over 3257 to 3259 (GHL) the chain is Lumenal.

In terms of assembly, homodimer; disulfide-linked. Interacts with PLK3.

Its subcellular location is the golgi apparatus membrane. May participate in forming intercisternal cross-bridges of the Golgi complex. This Homo sapiens (Human) protein is Golgin subfamily B member 1 (GOLGB1).